A 454-amino-acid polypeptide reads, in one-letter code: tRNA modification GTPase MnmE (454 aa).

(6S)-5-formyl-5,6,7,8-tetrahydrofolate contacts are provided by Arg23, Glu80, and Lys120. Residues 216–377 (TIKIVIAGPP…LKNKILEITT (162 aa)) form the TrmE-type G domain. K(+) is bound at residue Asn226. Residues 226 to 231 (NVGKSS), 245 to 251 (TNIPGTT), and 270 to 273 (DTAG) contribute to the GTP site. Ser230 is a Mg(2+) binding site. 3 residues coordinate K(+): Thr245, Ile247, and Thr250. Residue Thr251 coordinates Mg(2+). A (6S)-5-formyl-5,6,7,8-tetrahydrofolate-binding site is contributed by Lys454.

Belongs to the TRAFAC class TrmE-Era-EngA-EngB-Septin-like GTPase superfamily. TrmE GTPase family. In terms of assembly, homodimer. Heterotetramer of two MnmE and two MnmG subunits. Requires K(+) as cofactor.

Its subcellular location is the cytoplasm. Its function is as follows. Exhibits a very high intrinsic GTPase hydrolysis rate. Involved in the addition of a carboxymethylaminomethyl (cmnm) group at the wobble position (U34) of certain tRNAs, forming tRNA-cmnm(5)s(2)U34. This chain is tRNA modification GTPase MnmE, found in Buchnera aphidicola subsp. Cinara cedri (strain Cc).